Reading from the N-terminus, the 96-residue chain is MNIRPLNDKLIVERQEVENKSEGGIVLTSQSVKKSNRGKVIAAGLGKRLENGERASMEVKVGDVVIFNDGYGVKTEKMDGKEYLILSESDVLAIVE.

The protein belongs to the GroES chaperonin family. In terms of assembly, heptamer of 7 subunits arranged in a ring. Interacts with the chaperonin GroEL.

It is found in the cytoplasm. Together with the chaperonin GroEL, plays an essential role in assisting protein folding. The GroEL-GroES system forms a nano-cage that allows encapsulation of the non-native substrate proteins and provides a physical environment optimized to promote and accelerate protein folding. GroES binds to the apical surface of the GroEL ring, thereby capping the opening of the GroEL channel. This Vibrio vulnificus (strain CMCP6) protein is Co-chaperonin GroES 2.